Reading from the N-terminus, the 173-residue chain is Small ribosomal subunit protein uS4c (173 aa).

In terms of domain architecture, S4 RNA-binding spans 94 to 155 (SRLDSKIYRS…TKLTSELIEK (62 aa)).

It belongs to the universal ribosomal protein uS4 family. Part of the 30S ribosomal subunit. Contacts protein S5. The interaction surface between S4 and S5 is involved in control of translational fidelity.

It localises to the plastid. One of the primary rRNA binding proteins, it binds directly to 16S rRNA where it nucleates assembly of the body of the 30S subunit. Its function is as follows. With S5 and S12 plays an important role in translational accuracy. In Helicosporidium sp. subsp. Simulium jonesii (Green alga), this protein is Small ribosomal subunit protein uS4c (rps4).